The following is a 447-amino-acid chain: MAELLYLKEAEQVVTVAGASDKPKVGEDLSEIGVIERGSVIVEGEKIAFAGTDADARHYLQKRSGKVKTIEATGKILTPGLVDPHTHLVFAGSREQELTMRLKGKSYMSILQAGGGILSTTKSTRAATADQLAHESRLRLDRFLQHGVTTVEAKSGYGLATDAELKQLRVAQQLNNDHPVDVVSTFMGAHAIPPEWKQDPNGFVQLVAEEMIPQVAAENLAEFCDVFCEEGVFTVAQSQYILEEGKKHGLKPKIHADELVSFGGAELAAKVGAVSADHLLKASPTGIEQMAEAGVIAVLLPGTAFFLMTEPANARAMIEAGVPVALSTDRNPGSSPTESLPFIMNLACLTMKMTPEEVLAASTINAAHAIGRAKDIGSIEAGKNADLVLFDAPNYQTLQYNYAVNRVDTVMKAGKIVVEGGVLLEKTDNQRCSLATEDRGTRPIWQK.

Fe(3+)-binding residues include His85 and His87. Zn(2+) contacts are provided by His85 and His87. 4-imidazolone-5-propanoate-binding residues include Arg94, Tyr157, and His190. Tyr157 provides a ligand contact to N-formimidoyl-L-glutamate. Residue His255 participates in Fe(3+) binding. His255 is a Zn(2+) binding site. A 4-imidazolone-5-propanoate-binding site is contributed by Glu258. Asp329 is a binding site for Fe(3+). Asp329 is a binding site for Zn(2+). The N-formimidoyl-L-glutamate site is built by Asn331 and Gly333. Position 334 (Ser334) interacts with 4-imidazolone-5-propanoate.

The protein belongs to the metallo-dependent hydrolases superfamily. HutI family. The cofactor is Zn(2+). Fe(3+) is required as a cofactor.

It is found in the cytoplasm. The enzyme catalyses 4-imidazolone-5-propanoate + H2O = N-formimidoyl-L-glutamate. The protein operates within amino-acid degradation; L-histidine degradation into L-glutamate; N-formimidoyl-L-glutamate from L-histidine: step 3/3. Catalyzes the hydrolytic cleavage of the carbon-nitrogen bond in imidazolone-5-propanoate to yield N-formimidoyl-L-glutamate. It is the third step in the universal histidine degradation pathway. This Shouchella clausii (strain KSM-K16) (Alkalihalobacillus clausii) protein is Imidazolonepropionase.